The following is a 328-amino-acid chain: UPF0421 protein SSP0904 (328 aa).

4 helical membrane passes run 26–46 (LFCL…IVTI), 61–81 (LPAT…FGDQ), 84–104 (FAYA…NLHV), and 132–152 (LLTA…ILPP).

Belongs to the UPF0421 family.

It is found in the cell membrane. The protein is UPF0421 protein SSP0904 of Staphylococcus saprophyticus subsp. saprophyticus (strain ATCC 15305 / DSM 20229 / NCIMB 8711 / NCTC 7292 / S-41).